The following is a 341-amino-acid chain: 4-hydroxy-2-oxovalerate aldolase 2 (341 aa).

Positions 8 to 260 (VTVHDMTLRD…ETGVDVAKIT (253 aa)) constitute a Pyruvate carboxyltransferase domain. 16 to 17 (RD) lines the substrate pocket. A Mn(2+)-binding site is contributed by D17. The active-site Proton acceptor is the H20. Residues S170 and H199 each coordinate substrate. Mn(2+) is bound by residues H199 and H201. A substrate-binding site is contributed by Y290.

The protein belongs to the 4-hydroxy-2-oxovalerate aldolase family.

The catalysed reaction is (S)-4-hydroxy-2-oxopentanoate = acetaldehyde + pyruvate. This is 4-hydroxy-2-oxovalerate aldolase 2 from Dechloromonas aromatica (strain RCB).